The following is a 488-amino-acid chain: Probable (S)-N-methylcoclaurine 3'-hydroxylase isozyme 2 (488 aa).

Residues 2–21 form a helical membrane-spanning segment; sequence EVLSIAIVSFSFLLFLFFIL. Cys-427 contacts heme.

This sequence belongs to the cytochrome P450 family. Requires heme as cofactor. As to expression, expressed at low levels in roots.

It is found in the endoplasmic reticulum membrane. Its subcellular location is the microsome membrane. It catalyses the reaction (S)-N-methylcoclaurine + reduced [NADPH--hemoprotein reductase] + O2 = (S)-3'-hydroxy-N-methylcoclaurine + oxidized [NADPH--hemoprotein reductase] + H2O + H(+). It functions in the pathway alkaloid biosynthesis; (S)-reticuline biosynthesis; (S)-reticuline from (S)-norcoclaurine: step 3/4. Functionally, 3'-hydroxylation of (S)-N-methylcoclaurine. This chain is Probable (S)-N-methylcoclaurine 3'-hydroxylase isozyme 2 (CYP80B2), found in Coptis japonica (Japanese goldthread).